Consider the following 207-residue polypeptide: Small ribosomal subunit protein uS4 (207 aa).

The S4 RNA-binding domain occupies 97–159 (SRLDNVCYRM…AKSQLRIQAA (63 aa)).

Belongs to the universal ribosomal protein uS4 family. Part of the 30S ribosomal subunit. Contacts protein S5. The interaction surface between S4 and S5 is involved in control of translational fidelity.

Functionally, one of the primary rRNA binding proteins, it binds directly to 16S rRNA where it nucleates assembly of the body of the 30S subunit. Its function is as follows. With S5 and S12 plays an important role in translational accuracy. In Halorhodospira halophila (strain DSM 244 / SL1) (Ectothiorhodospira halophila (strain DSM 244 / SL1)), this protein is Small ribosomal subunit protein uS4.